Reading from the N-terminus, the 331-residue chain is MAIELEDLGLSPDVADVMQRLARVGAGIARIISRNGLERDLGAGVGTNAGGDGQKALDVIADDAFRAALEGSAVAYYASEEQDEVVTLGEGSLALAIDPLDGSSNIDVNVSIGTIFSIFPAAAGPEASFLRPGTEQIAGGYIIYGPQCALVCSFGQGVQHWVLDLDAGIFRRMPDIRPLPAETSEFAINASNYRHWPQPIRAFVDDLVAGAEGPRGKNFNMRWIASLVAETHRILMRGGVFLYPGDERKGYERGRLRHVYECAPIAFLIANVGGRATDGCADILTALPDRLHARTPFVFGCASKVARVAAYHDLACEETSALFGSRGLFRS.

Glu-80, Asp-98, Leu-100, and Asp-101 together coordinate Mg(2+). Substrate is bound by residues 101 to 104 (DGSS) and Asn-189. Glu-261 provides a ligand contact to Mg(2+).

Belongs to the FBPase class 1 family. As to quaternary structure, homotetramer. It depends on Mg(2+) as a cofactor.

The protein resides in the cytoplasm. It carries out the reaction beta-D-fructose 1,6-bisphosphate + H2O = beta-D-fructose 6-phosphate + phosphate. Its pathway is carbohydrate biosynthesis; Calvin cycle. In Cereibacter sphaeroides (strain ATCC 17029 / ATH 2.4.9) (Rhodobacter sphaeroides), this protein is Fructose-1,6-bisphosphatase class 1 2.